Consider the following 249-residue polypeptide: Triosephosphate isomerase (249 aa).

8–10 (NWK) is a binding site for substrate. H95 (electrophile) is an active-site residue. E166 serves as the catalytic Proton acceptor. Residues G172, S211, and 232 to 233 (GG) each bind substrate.

This sequence belongs to the triosephosphate isomerase family. Homodimer.

The protein resides in the cytoplasm. It catalyses the reaction D-glyceraldehyde 3-phosphate = dihydroxyacetone phosphate. Its pathway is carbohydrate biosynthesis; gluconeogenesis. It functions in the pathway carbohydrate degradation; glycolysis; D-glyceraldehyde 3-phosphate from glycerone phosphate: step 1/1. Involved in the gluconeogenesis. Catalyzes stereospecifically the conversion of dihydroxyacetone phosphate (DHAP) to D-glyceraldehyde-3-phosphate (G3P). This Granulibacter bethesdensis (strain ATCC BAA-1260 / CGDNIH1) protein is Triosephosphate isomerase.